Reading from the N-terminus, the 128-residue chain is Large ribosomal subunit protein bL20 (128 aa).

It belongs to the bacterial ribosomal protein bL20 family.

In terms of biological role, binds directly to 23S ribosomal RNA and is necessary for the in vitro assembly process of the 50S ribosomal subunit. It is not involved in the protein synthesizing functions of that subunit. The chain is Large ribosomal subunit protein bL20 from Anaplasma phagocytophilum (strain HZ).